A 158-amino-acid polypeptide reads, in one-letter code: NADH-quinone oxidoreductase subunit B (158 aa).

Positions 37, 38, 102, and 132 each coordinate [4Fe-4S] cluster.

The protein belongs to the complex I 20 kDa subunit family. As to quaternary structure, NDH-1 is composed of 14 different subunits. Subunits NuoB, C, D, E, F, and G constitute the peripheral sector of the complex. [4Fe-4S] cluster serves as cofactor.

Its subcellular location is the cell inner membrane. The catalysed reaction is a quinone + NADH + 5 H(+)(in) = a quinol + NAD(+) + 4 H(+)(out). Its function is as follows. NDH-1 shuttles electrons from NADH, via FMN and iron-sulfur (Fe-S) centers, to quinones in the respiratory chain. Couples the redox reaction to proton translocation (for every two electrons transferred, four hydrogen ions are translocated across the cytoplasmic membrane), and thus conserves the redox energy in a proton gradient. This chain is NADH-quinone oxidoreductase subunit B, found in Hydrogenovibrio crunogenus (strain DSM 25203 / XCL-2) (Thiomicrospira crunogena).